A 225-amino-acid polypeptide reads, in one-letter code: Germin-like protein 3-8 (225 aa).

The signal sequence occupies residues 1 to 25 (MSRTSSAPLLVLSAALAVLASTCIA). Cysteine 34 and cysteine 57 are disulfide-bonded. The 149-residue stretch at 71-219 (AGLAVASDTD…SFQVDAKIIK (149 aa)) folds into the Cupin type-1 domain. A glycan (N-linked (GlcNAc...) asparagine) is linked at asparagine 86. Residues histidine 119, histidine 121, glutamate 126, and histidine 165 each contribute to the Mn(2+) site.

The protein belongs to the germin family. As to quaternary structure, oligomer (believed to be a pentamer but probably hexamer).

The protein resides in the secreted. It is found in the extracellular space. Its subcellular location is the apoplast. Functionally, may play a role in plant defense. Probably has no oxalate oxidase activity even if the active site is conserved. This chain is Germin-like protein 3-8, found in Oryza sativa subsp. japonica (Rice).